The sequence spans 30 residues: Brevinin-2PTa (30 aa).

A disulfide bond links Cys24 and Cys30.

As to expression, expressed by the skin glands.

It is found in the secreted. In terms of biological role, has antibacterial activity against the Gram-positive bacterium S.aureus ATCC 25923 (MIC=18 uM) and the Gram-negative bacterium E.coli ATCC 25726 (MIC=18 uM). This Pulchrana picturata (Malaysian fire frog) protein is Brevinin-2PTa.